Here is a 571-residue protein sequence, read N- to C-terminus: Chondroitin sulfate proteoglycan 5 (571 aa).

Positions 1-30 (MGRAGGGGPGWGPPPVLLLLGVTLVLTAGA) are cleaved as a signal peptide. The Extracellular segment spans residues 31-428 (VPAREAGSAI…SIITDFQVMC (398 aa)). The O-linked (Xyl...) (chondroitin sulfate) serine glycan is linked to Ser38. Asn57 carries N-linked (GlcNAc...) asparagine glycosylation. The interval 57-91 (NDTREEAGLPAAGEDETSWTERGSELAAVGPGVGP) is disordered. O-linked (GalNAc...) threonine glycosylation occurs at Thr76. The O-linked (Xyl...) (chondroitin sulfate) serine glycan is linked to Ser123. O-linked (GalNAc...) threonine glycosylation is present at Thr132. Disordered stretches follow at residues 137–169 (DEAL…KPSL), 186–254 (GGST…TPSW), and 279–357 (DDLE…DLAT). The O-linked (GalNAc...) serine glycan is linked to Ser143. Residues Thr144 and Thr153 are each glycosylated (O-linked (GalNAc...) threonine). Ser156 and Ser160 each carry an O-linked (GalNAc...) serine glycan. Residues Thr162 and Thr198 are each glycosylated (O-linked (GalNAc...) threonine). Residues 214-223 (IDIDYFEGLD) are compositionally biased toward acidic residues. Thr240 carries O-linked (GalNAc...) threonine glycosylation. Positions 270–306 (DFYPTTSFYDDLEEEEEEEEDKDAVGGGDLEDESDLL) are interaction with TNC and TNR. The segment covering 279-291 (DDLEEEEEEEEDK) has biased composition (acidic residues). 2 O-linked (GalNAc...) threonine glycosylation sites follow: Thr318 and Thr322. N-linked (GlcNAc...) asparagine glycosylation occurs at Asn372. Residues 376–418 (RSVCDLFPSYCHNGGQCYLVENIGAFCRCNTQDYIWHKGMRCE) form the EGF-like domain. 3 disulfides stabilise this stretch: Cys379-Cys392, Cys386-Cys402, and Cys404-Cys417. Residues 429–449 (VAVGSAALVLLLLFMMTVFFA) form a helical membrane-spanning segment. The segment at 447 to 465 (FFAKKLYLLKTENTKLRRT) is interaction with GOPC. The Cytoplasmic portion of the chain corresponds to 450-571 (KKLYLLKTEN…EVNCLQNNLT (122 aa)). Phosphoserine is present on residues Ser472, Ser480, Ser488, and Ser548. Residues 538-563 (EESFNIQNSMSPKLEGGKGDQDDLEV) are disordered.

In terms of assembly, interacts with ERBB3 and GOPC. Binds TNR and probably TNC. Interacts with MDK; this interaction is independent of the presence of chondroitin sulfate chains and promotes elongation of oligodendroglial precursor-like cells. Post-translationally, N-glycosylated. O-glycosylated; contains chondroitin sulfate glycans. Part-time proteoglycan, expressed in part as a proteoglycan exhibiting chondroitin sulfate glycans and in part as a non-proteoglycan form. The relative amount of both forms depends on tissues and tissue maturation. In terms of processing, phosphorylated; in intracellular and extracellular parts. Expressed in cerebral cortex and cerebellum. Expressed in retina (at protein level).

The protein localises to the cell membrane. Its subcellular location is the synaptic cell membrane. It localises to the endoplasmic reticulum membrane. It is found in the golgi apparatus membrane. The protein resides in the cell surface. The protein localises to the secreted. Its function is as follows. May function as a growth and differentiation factor involved in neuritogenesis. May induce ERBB3 activation. The polypeptide is Chondroitin sulfate proteoglycan 5 (Cspg5) (Rattus norvegicus (Rat)).